Here is a 410-residue protein sequence, read N- to C-terminus: Tryptophan synthase beta chain (410 aa).

Lysine 100 carries the post-translational modification N6-(pyridoxal phosphate)lysine.

Belongs to the TrpB family. In terms of assembly, tetramer of two alpha and two beta chains. Pyridoxal 5'-phosphate is required as a cofactor.

The enzyme catalyses (1S,2R)-1-C-(indol-3-yl)glycerol 3-phosphate + L-serine = D-glyceraldehyde 3-phosphate + L-tryptophan + H2O. Its pathway is amino-acid biosynthesis; L-tryptophan biosynthesis; L-tryptophan from chorismate: step 5/5. Functionally, the beta subunit is responsible for the synthesis of L-tryptophan from indole and L-serine. In Pyrobaculum aerophilum (strain ATCC 51768 / DSM 7523 / JCM 9630 / CIP 104966 / NBRC 100827 / IM2), this protein is Tryptophan synthase beta chain.